Reading from the N-terminus, the 74-residue chain is MLVLTRKQSEAIQIGEDIEIEVIAIEGEQVKLGIRAPKSVDIYRKEIYVDITNQNNEAAIIDKNLLQFLKNNNS.

This sequence belongs to the CsrA/RsmA family. Homodimer; the beta-strands of each monomer intercalate to form a hydrophobic core, while the alpha-helices form wings that extend away from the core.

It localises to the cytoplasm. Its function is as follows. A translational regulator that binds mRNA to regulate translation initiation and/or mRNA stability. Usually binds in the 5'-UTR at or near the Shine-Dalgarno sequence preventing ribosome-binding, thus repressing translation. Its main target seems to be the major flagellin gene, while its function is anatagonized by FliW. This Oceanobacillus iheyensis (strain DSM 14371 / CIP 107618 / JCM 11309 / KCTC 3954 / HTE831) protein is Translational regulator CsrA.